We begin with the raw amino-acid sequence, 460 residues long: Serine/threonine-protein kinase UL13 (460 aa).

Residues 1 to 37 are disordered; that stretch reads MATRGRPGAKQVADHSVSDGGEQRRIPQKPPGPERCD. The span at 12–25 shows a compositional bias: basic and acidic residues; it reads VADHSVSDGGEQRR. One can recognise a Protein kinase domain in the interval 95–460; the sequence is LEPYRFLGRG…DVRRTVSALA (366 aa). Residues 101 to 109 and lysine 120 contribute to the ATP site; that span reads LGRGGYGSV. Catalysis depends on aspartate 219, which acts as the Proton acceptor.

Belongs to the protein kinase superfamily. Ser/Thr protein kinase family. Autophosphorylated.

It localises to the virion tegument. It is found in the host nucleus. It carries out the reaction L-seryl-[protein] + ATP = O-phospho-L-seryl-[protein] + ADP + H(+). The catalysed reaction is L-threonyl-[protein] + ATP = O-phospho-L-threonyl-[protein] + ADP + H(+). Multifunctional serine/threonine kinase that plays a role in several processes including egress of virus particles from the nucleus, modulation of the actin cytoskeleton and regulation of viral and cellular gene expression. Regulates the nuclear localization of viral envelopment factors UL34 and UL31 homologs, by phosphorylating the US3 kinase homolog, indicating a role in nuclear egress. Disrupts host nuclear lamins, including LMNA and LMNB1. Phosphorylates the viral Fc receptor composed of glycoproteins E (gE) and I (gI). Phosphorylation of glycoprotein E (gE) by UL13 homolog alters its subcellular localization, from the host early endosome to the plasma membrane. Participates in the transcriptional regulation of cellular and viral mRNAs mainly by phosphorylating the viral transcriptional regulator ICP22 homolog. The polypeptide is Serine/threonine-protein kinase UL13 (UL13) (Amazona oratrix (yellow-headed parrot)).